A 372-amino-acid polypeptide reads, in one-letter code: GDP-mannose transporter GONST3 (372 aa).

Transmembrane regions (helical) follow at residues 33–53 (ASVY…SIIN), 60–80 (FPYP…GVLL), 92–112 (LNLL…LSLF), 125–145 (TFIV…TLFL), 155–175 (WGSL…DYQF), 177–197 (IAAY…FVYI), 209–229 (WGLV…ELLI), 251–271 (VVLP…FGFS), 280–300 (GFTV…LMVW), and 303–323 (HSTF…VMYQ). The segment at 331–372 (NATQEAKPQEQDEEQEKLLEMQENKESNSVDIKETLKSEEKL) is disordered. The segment covering 346–372 (EKLLEMQENKESNSVDIKETLKSEEKL) has biased composition (basic and acidic residues).

Belongs to the nucleotide-sugar transporter family. GDP-Mannose:GMP antiporter (GMA) (TC 2.A.7.13) subfamily. In terms of tissue distribution, expressed in rosette leaves, stems, flowers and siliques.

It localises to the golgi apparatus membrane. GDP-mannose transporter that may be involved in the import of GDP-mannose from the cytoplasm into the Golgi lumen. The chain is GDP-mannose transporter GONST3 from Arabidopsis thaliana (Mouse-ear cress).